Reading from the N-terminus, the 96-residue chain is Protein RnfH (96 aa).

This sequence belongs to the UPF0125 (RnfH) family.

This is Protein RnfH from Escherichia coli O17:K52:H18 (strain UMN026 / ExPEC).